The primary structure comprises 134 residues: Phosphoribosyl-AMP cyclohydrolase (134 aa).

Mg(2+) is bound at residue aspartate 77. A Zn(2+)-binding site is contributed by cysteine 78. Mg(2+) is bound by residues aspartate 79 and aspartate 81. Residues cysteine 95 and cysteine 102 each coordinate Zn(2+).

This sequence belongs to the PRA-CH family. As to quaternary structure, homodimer. It depends on Mg(2+) as a cofactor. Zn(2+) is required as a cofactor.

The protein resides in the cytoplasm. It carries out the reaction 1-(5-phospho-beta-D-ribosyl)-5'-AMP + H2O = 1-(5-phospho-beta-D-ribosyl)-5-[(5-phospho-beta-D-ribosylamino)methylideneamino]imidazole-4-carboxamide. The protein operates within amino-acid biosynthesis; L-histidine biosynthesis; L-histidine from 5-phospho-alpha-D-ribose 1-diphosphate: step 3/9. Its function is as follows. Catalyzes the hydrolysis of the adenine ring of phosphoribosyl-AMP. The sequence is that of Phosphoribosyl-AMP cyclohydrolase from Pseudomonas aeruginosa (strain LESB58).